The chain runs to 953 residues: Coatomer subunit beta (953 aa).

Thr2 is subject to N-acetylthreonine. HEAT repeat units follow at residues 96-131 (HEMILVCDAYRKDLQHPNEFIRGSTLRFLCKLKEAE), 132-168 (LLEPLMPAIRACLEHRHSYVRRNAVLAIYTIYRNFEH), 240-276 (SERARFIRCIYNLLQSSSPAVKYEAAGTLVTLSSAPT), 277-314 (AIKAAAQCYIDLIIKESDNNVKLIVLDRLIELKEHPAH), 316-353 (RVLQDLVMDILRVLSTPDLEVRKKTLQLALDLVSSRNV), and 396-433 (DMAANVIPVLMEFLSDNNEAAAADVLEFVREAIQRFDN). Lys494 carries the post-translational modification N6-acetyllysine.

As to quaternary structure, oligomeric complex that consists of at least the alpha, beta, beta', gamma, delta, epsilon and zeta subunits. Interacts (via C-terminus) with HIV-1 Nef; the interaction is direct. Interacts with CAPN8 and PRKCE. Interacts with SCYL1. Interacts with COPG1. Interacts with ARF1 (myristoylated); this interaction is required for binding of COPB1 to Golgi membranes. Interacts (via trunk domain) with ARF1 (via switch I region); the interaction is direct. Interacts with KCNK2 (via N-terminus); this interaction increases the channel-mediated whole cell currents and promotes plasma membrane expression of KCNK2. Interacts with anthrax lethal factor (LF); this interaction may facilitate endosomal vesicle membrane translocation of LF and its release from the lumen of endosomal vesicles to external milieu. Interacts with STX17. Interacts with TMEM115. Interacts with TMEM41B.

The protein resides in the cytoplasm. The protein localises to the golgi apparatus membrane. It is found in the cytoplasmic vesicle. It localises to the COPI-coated vesicle membrane. Its subcellular location is the cell membrane. The protein resides in the endoplasmic reticulum-Golgi intermediate compartment. Functionally, the coatomer is a cytosolic protein complex that binds to dilysine motifs and reversibly associates with Golgi non-clathrin-coated vesicles, which further mediate biosynthetic protein transport from the ER, via the Golgi up to the trans Golgi network. Coatomer complex is required for budding from Golgi membranes, and is essential for the retrograde Golgi-to-ER transport of dilysine-tagged proteins. In mammals, the coatomer can only be recruited by membranes associated to ADP-ribosylation factors (ARFs), which are small GTP-binding proteins; the complex also influences the Golgi structural integrity, as well as the processing, activity, and endocytic recycling of LDL receptors. Plays a functional role in facilitating the transport of kappa-type opioid receptor mRNAs into axons and enhances translation of these proteins. Required for limiting lipid storage in lipid droplets. Involved in lipid homeostasis by regulating the presence of perilipin family members PLIN2 and PLIN3 at the lipid droplet surface and promoting the association of adipocyte surface triglyceride lipase (PNPLA2) with the lipid droplet to mediate lipolysis. Involved in the Golgi disassembly and reassembly processes during cell cycle. Involved in autophagy by playing a role in early endosome function. Plays a role in organellar compartmentalization of secretory compartments including endoplasmic reticulum (ER)-Golgi intermediate compartment (ERGIC), Golgi, trans-Golgi network (TGN) and recycling endosomes, and in biosynthetic transport of CAV1. Promotes degradation of Nef cellular targets CD4 and MHC class I antigens by facilitating their trafficking to degradative compartments. The polypeptide is Coatomer subunit beta (COPB1) (Pongo abelii (Sumatran orangutan)).